The chain runs to 558 residues: Adenine deaminase (558 aa).

The protein belongs to the metallo-dependent hydrolases superfamily. Adenine deaminase family. Requires Mn(2+) as cofactor.

It carries out the reaction adenine + H2O + H(+) = hypoxanthine + NH4(+). The polypeptide is Adenine deaminase (Deinococcus deserti (strain DSM 17065 / CIP 109153 / LMG 22923 / VCD115)).